The sequence spans 614 residues: Acetylcholinesterase (614 aa).

Positions Met1–Ala31 are cleaved as a signal peptide. Cys100 and Cys127 are disulfide-bonded. Catalysis depends on Ser234, which acts as the Acyl-ester intermediate. Cysteines 288 and 303 form a disulfide. Asn296 carries N-linked (GlcNAc...) asparagine glycosylation. The Charge relay system role is filled by Glu365. Asn381 is a glycosylation site (N-linked (GlcNAc...) asparagine). The cysteines at positions 440 and 560 are disulfide-linked. The Charge relay system role is filled by His478. N-linked (GlcNAc...) asparagine glycosylation occurs at Asn495.

This sequence belongs to the type-B carboxylesterase/lipase family. As to quaternary structure, homotetramer; composed of disulfide-linked homodimers. Catalytic forms H (GPI-anchor dimer) and T (asymmetric collagen-tailed), which differ in their C-terminus, account for all types of known ACHE forms. Interacts with PRIMA1. The interaction with PRIMA1 is required to anchor it to the basal lamina of cells and organize into tetramers. Has been found in central nervous system and muscle. Found in embryonic liver and spleen but not in adult liver.

The protein localises to the synapse. The protein resides in the secreted. It localises to the cell membrane. The catalysed reaction is acetylcholine + H2O = choline + acetate + H(+). Its function is as follows. Terminates signal transduction at the neuromuscular junction by rapid hydrolysis of the acetylcholine released into the synaptic cleft. In Rattus norvegicus (Rat), this protein is Acetylcholinesterase (Ache).